A 434-amino-acid polypeptide reads, in one-letter code: Methylenetetrahydrofolate--tRNA-(uracil-5-)-methyltransferase TrmFO (434 aa).

FAD is bound at residue 10 to 15 (GAGLAG).

It belongs to the MnmG family. TrmFO subfamily. FAD is required as a cofactor.

It localises to the cytoplasm. The enzyme catalyses uridine(54) in tRNA + (6R)-5,10-methylene-5,6,7,8-tetrahydrofolate + NADH + H(+) = 5-methyluridine(54) in tRNA + (6S)-5,6,7,8-tetrahydrofolate + NAD(+). The catalysed reaction is uridine(54) in tRNA + (6R)-5,10-methylene-5,6,7,8-tetrahydrofolate + NADPH + H(+) = 5-methyluridine(54) in tRNA + (6S)-5,6,7,8-tetrahydrofolate + NADP(+). In terms of biological role, catalyzes the folate-dependent formation of 5-methyl-uridine at position 54 (M-5-U54) in all tRNAs. The chain is Methylenetetrahydrofolate--tRNA-(uracil-5-)-methyltransferase TrmFO from Bacillus cytotoxicus (strain DSM 22905 / CIP 110041 / 391-98 / NVH 391-98).